The following is a 273-amino-acid chain: Vitamin B12-binding protein (273 aa).

Positions 1–18 (MMKTLSSLLLLFSVSLQA) are cleaved as a signal peptide. Residues 23–273 (RVISLAPHAT…EHFASIEQKR (251 aa)) form the Fe/B12 periplasmic-binding domain. The cysteines at positions 183 and 263 are disulfide-linked.

This sequence belongs to the BtuF family. In terms of assembly, the complex is composed of two ATP-binding proteins (BtuD), two transmembrane proteins (BtuC) and a solute-binding protein (BtuF).

It is found in the periplasm. Its function is as follows. Part of the ABC transporter complex BtuCDF involved in vitamin B12 import. Binds vitamin B12 and delivers it to the periplasmic surface of BtuC. The sequence is that of Vitamin B12-binding protein from Vibrio vulnificus (strain CMCP6).